The primary structure comprises 504 residues: Maturase K (504 aa).

It belongs to the intron maturase 2 family. MatK subfamily.

It is found in the plastid. It localises to the chloroplast. In terms of biological role, usually encoded in the trnK tRNA gene intron. Probably assists in splicing its own and other chloroplast group II introns. The sequence is that of Maturase K from Quercus rubra (Northern red oak).